We begin with the raw amino-acid sequence, 360 residues long: Alpha-2-HS-glycoprotein (360 aa).

Residues 1–15 (LVLLLSLAQLWSCHL) form the signal peptide. In terms of domain architecture, Cystatin fetuin-A-type 1 spans 24–130 (YREHNCDDPE…QFTVLSAKCD (107 aa)). 6 disulfide bridges follow: Cys-29/Cys-351, Cys-86/Cys-97, Cys-111/Cys-129, Cys-143/Cys-146, Cys-205/Cys-216, and Cys-227/Cys-244. Residue Asn-96 is glycosylated (N-linked (GlcNAc...) asparagine). A Phosphoserine modification is found at Ser-131. Thr-132 is modified (phosphothreonine). Position 135 is a phosphoserine (Ser-135). Residues 141 to 252 (KLCPDCPLLT…TCTIFPAQPV (112 aa)) enclose the Cystatin fetuin-A-type 2 domain. Asn-153 carries N-linked (GlcNAc...) asparagine glycosylation. Positions 260–285 (VAGAAAVEPAPAVDPASPVSPPDGQS) are disordered. Thr-312 carries the post-translational modification Phosphothreonine. Ser-318, Ser-321, and Ser-323 each carry phosphoserine.

The protein belongs to the fetuin family. In terms of processing, phosphorylated by FAM20C in the extracellular medium. As to expression, bone marrow.

Its subcellular location is the secreted. Functionally, a cell adhesion protein that binds immature cells of the granulocyte lineage. This chain is Alpha-2-HS-glycoprotein (AHSG), found in Oryctolagus cuniculus (Rabbit).